The following is a 129-amino-acid chain: NADPH-dependent 7-cyano-7-deazaguanine reductase (129 aa).

The active-site Thioimide intermediate is the C42. Residue D49 is the Proton donor of the active site. Substrate contacts are provided by residues 64–66 and 83–84; these read VEL and HE.

Belongs to the GTP cyclohydrolase I family. QueF type 1 subfamily.

It is found in the cytoplasm. The catalysed reaction is 7-aminomethyl-7-carbaguanine + 2 NADP(+) = 7-cyano-7-deazaguanine + 2 NADPH + 3 H(+). It participates in tRNA modification; tRNA-queuosine biosynthesis. Its function is as follows. Catalyzes the NADPH-dependent reduction of 7-cyano-7-deazaguanine (preQ0) to 7-aminomethyl-7-deazaguanine (preQ1). In Synechococcus sp. (strain CC9605), this protein is NADPH-dependent 7-cyano-7-deazaguanine reductase.